A 419-amino-acid chain; its full sequence is MASNTSRSAHLAQIITENTANIETYRREQGLPPLSLGPDAPLDVKYPPNVEKCRRAVIDATLELGELATGPVELRLVPGWAIMTMFGVTQFICDFDIARQIPLAGDISYEDLSKAINVAVPVLRQVLRAGMPYHMFYESRPGHVAHTATTKVMASESLISDWTSLYTDVLFPASAGLSKALREEPTASDPSKTGFMVTKGDGESGMYMYFEKHPEEARRFAGVMEAFQKDEAYAVRHLTDSWPSDSQTGKLVDLGGSTGAVAFALAEKFPGLEIVVQDLPGALEAAHVREGKNVSFMPHDFFNEQPVKDADVYMFRWILHNWPDGHVQRILRALVPSLKPGAKVIVFDEIMPPAGTLPLSIERYQRNIDFGMLTLFNSKIRDIVEWKEIITQSDQRFNVTGVRYPENSRLSLIEIVWQP.

Residues 255 to 256 (GG), Asp-278, 300 to 301 (DF), and Arg-316 each bind S-adenosyl-L-methionine. His-320 functions as the Proton acceptor in the catalytic mechanism.

It belongs to the class I-like SAM-binding methyltransferase superfamily. Cation-independent O-methyltransferase family.

The catalysed reaction is 2-(2,4-dihydroxy-6-oxidobenzoyl)-5-hydroxy-3-methylbenzenolate + S-adenosyl-L-methionine = griseophenone D + S-adenosyl-L-homocysteine + H(+). It participates in secondary metabolite biosynthesis; terpenoid biosynthesis. Its function is as follows. O-methyltransferase; part of the gene cluster that mediates the biosynthesis of griseofulvin, an important antifungal drug that has been in use for a long time for treating dermatophyte infections. The first step of the pathway is the formation of the heptaketide backbone by gsfA which is initiated by priming with acetyl-CoA, followed by sequential condensations of 6 malonyl-CoA units. The resulting benzophenone can undergo a spontaneous dehydration to form norlichexanthone. However, the true precursor for the griseofulvin biosynthesis is not norlichexanthone, but the heptaketide benzophenone that is O-methylated at 3-OH by gsfB to produce griseophenone D which is further methylated at 9-OH by gsfC to yield griseophenone C. Griseophenone C is then substrate of halogenase gsfI which is responsible for the regio-specific chlorination at the C13 position to form griseophenone B. The cytochrome P450 gsfF catalyzes the coupling of orcinol and phloroglucinol rings in griseophenone B to form desmethyl-dehydrogriseofulvin A which is further methylated at 5-OH by gsfD to yield dehydrogriseofulvin. Finally, gsfE performs stereospecific reduction of enone 18 of dehydrogriseofulvin to afford the final product griseofulvin. In Penicillium aethiopicum, this protein is O-methyltransferase gsfB.